Reading from the N-terminus, the 428-residue chain is Adenylosuccinate synthetase (428 aa).

Residues 12-18 (GDEGKGK) and 40-42 (GHT) contribute to the GTP site. The active-site Proton acceptor is Asp13. Mg(2+) is bound by residues Asp13 and Gly40. IMP is bound by residues 13-16 (DEGK), 38-41 (NAGH), Thr128, Arg142, Gln223, Thr238, and Arg302. His41 (proton donor) is an active-site residue. Substrate is bound at residue 298–304 (TTTGRPR). GTP is bound by residues Arg304, 330 to 332 (KLD), and 412 to 414 (GVG).

This sequence belongs to the adenylosuccinate synthetase family. As to quaternary structure, homodimer. It depends on Mg(2+) as a cofactor.

The protein resides in the cytoplasm. It carries out the reaction IMP + L-aspartate + GTP = N(6)-(1,2-dicarboxyethyl)-AMP + GDP + phosphate + 2 H(+). It functions in the pathway purine metabolism; AMP biosynthesis via de novo pathway; AMP from IMP: step 1/2. Its function is as follows. Plays an important role in the de novo pathway of purine nucleotide biosynthesis. Catalyzes the first committed step in the biosynthesis of AMP from IMP. This Kineococcus radiotolerans (strain ATCC BAA-149 / DSM 14245 / SRS30216) protein is Adenylosuccinate synthetase.